The chain runs to 528 residues: G patch domain-containing protein 2 (528 aa).

The tract at residues Leu36–Asp119 is disordered. The span at Arg63–Asn77 shows a compositional bias: basic residues. The segment covering Glu98–Ser117 has biased composition (basic and acidic residues). Residues Ser115, Ser117, Ser146, and Ser195 each carry the phosphoserine modification. Disordered regions lie at residues Ser232–Glu282 and Gly487–Ala528. The span at Asn239 to Asp252 shows a compositional bias: basic and acidic residues. The 47-residue stretch at Glu467–Pro513 folds into the G-patch domain. Over residues Lys514–Ala528 the composition is skewed to polar residues.

Interacts with DHX15. As to expression, testis.

The protein resides in the nucleus speckle. Its subcellular location is the nucleus. It localises to the nucleolus. Enhances the ATPase activity of DHX15 in vitro. The sequence is that of G patch domain-containing protein 2 (GPATCH2) from Homo sapiens (Human).